Consider the following 694-residue polypeptide: Elongation factor G (694 aa).

Positions 9–288 (SKIRNIGIMA…VIVKWLPSPK (280 aa)) constitute a tr-type G domain. GTP contacts are provided by residues 18–25 (AHIDAGKT), 82–86 (DTPGH), and 136–139 (NKMD).

Belongs to the TRAFAC class translation factor GTPase superfamily. Classic translation factor GTPase family. EF-G/EF-2 subfamily.

The protein resides in the cytoplasm. Functionally, catalyzes the GTP-dependent ribosomal translocation step during translation elongation. During this step, the ribosome changes from the pre-translocational (PRE) to the post-translocational (POST) state as the newly formed A-site-bound peptidyl-tRNA and P-site-bound deacylated tRNA move to the P and E sites, respectively. Catalyzes the coordinated movement of the two tRNA molecules, the mRNA and conformational changes in the ribosome. This chain is Elongation factor G, found in Chlamydia abortus (strain DSM 27085 / S26/3) (Chlamydophila abortus).